Here is a 207-residue protein sequence, read N- to C-terminus: Protein ERP4 (207 aa).

Residues 1–21 form the signal peptide; the sequence is MRVFTLIAILFSSSLLTHAFS. Residues 22–174 lie on the Lumenal side of the membrane; the sequence is SNYAPVGISL…TVSSTESRLT (153 aa). The GOLD domain occupies 36–118; it reads KECLYYDLSS…PKKVEITLEK (83 aa). The helical transmembrane segment at 175–195 threads the bilayer; the sequence is WLSLLIMGVMVGISIVQALII. Residues 196–207 lie on the Cytoplasmic side of the membrane; it reads QFFFTSRQKNYV.

This sequence belongs to the EMP24/GP25L family.

It is found in the endoplasmic reticulum membrane. Functionally, involved in vesicular protein trafficking. The protein is Protein ERP4 (ERP4) of Saccharomyces cerevisiae (strain ATCC 204508 / S288c) (Baker's yeast).